The sequence spans 119 residues: Large ribosomal subunit protein bL20 (119 aa).

It belongs to the bacterial ribosomal protein bL20 family.

Its function is as follows. Binds directly to 23S ribosomal RNA and is necessary for the in vitro assembly process of the 50S ribosomal subunit. It is not involved in the protein synthesizing functions of that subunit. The chain is Large ribosomal subunit protein bL20 from Clostridium kluyveri (strain NBRC 12016).